The primary structure comprises 725 residues: Homeobox-leucine zipper protein HDG3 (725 aa).

Residues 1-74 (MSQSNMVPVA…PRHKKKKYNR (74 aa)) are disordered. Residues 11–40 (NNGDNNNDNENNNNNNNNGGTDNTNAGNDS) are compositionally biased toward low complexity. Polar residues predominate over residues 46–64 (DSGNTSSGNHGEGLGNNQA). The span at 65–74 (PRHKKKKYNR) shows a compositional bias: basic residues. Residues 68–127 (KKKKYNRHTQLQISEMEAFFRECPHPDDKQRYDLSAQLGLDPVQIKFWFQNKRTQNKNQQ) constitute a DNA-binding region (homeobox). Residues 117-201 (QNKRTQNKNQ…SVTAEKISRL (85 aa)) adopt a coiled-coil conformation. One can recognise an START domain in the interval 243-475 (DANTKPIIME…LVRQCERISS (233 aa)).

Belongs to the HD-ZIP homeobox family. Class IV subfamily. Interacts with AIL7/PLT7, ANT, BBM and AIL1. In terms of tissue distribution, expressed in siliques.

It localises to the nucleus. Probable transcription factor. Seems to promote cell differentiation. The chain is Homeobox-leucine zipper protein HDG3 from Arabidopsis thaliana (Mouse-ear cress).